Consider the following 468-residue polypeptide: Monocarboxylate transporter 6 (468 aa).

Topologically, residues 1–13 (MARALEQADGRWA) are cytoplasmic. Residues 14–34 (WVVLLSSLVTQALTLGFPTCI) traverse the membrane as a helical segment. Residues 35–53 (GVFFTDLQRDFQASNSETS) lie on the Extracellular side of the membrane. The chain crosses the membrane as a helical span at residues 54-74 (WFPSILGAMVHGGGPLCSILV). The Cytoplasmic segment spans residues 75 to 80 (KHFGCR). A helical transmembrane segment spans residues 81–101 (VTMMLGGVLASLGMVVSTFSG). Serine 102 is a topological domain (extracellular). A helical transmembrane segment spans residues 103–122 (LTHLFLTAGVITGLGMCFSF). At 123–138 (QSSITVVGLYFVRRRP) the chain is on the cytoplasmic side. A helical membrane pass occupies residues 139–159 (LANALASMGLSMGVTLWPLLA). The Extracellular portion of the chain corresponds to 160-171 (RYLLETLGWRGA). A helical transmembrane segment spans residues 172 to 192 (FLIFGGILLHCCVCGALLRPV). Over 193–239 (ATNEVPEPKEDPLLPPKIPTRSCLATCVSTIRYHLAFDILRHNMGFC) the chain is Cytoplasmic. A helical membrane pass occupies residues 240–260 (IYVTGVTWMNLGFALPHIFLV). Over 261-274 (PYAMHHGVDDYWAA) the chain is Extracellular. A helical transmembrane segment spans residues 275-295 (MLMSIVGFCNIFLRPMAGLLL). The Cytoplasmic portion of the chain corresponds to 296–306 (AGRKSLAAYRK). A helical membrane pass occupies residues 307–327 (YLFAVAILINGLTNLICTVSA). Topologically, residues 328-330 (DFR) are extracellular. A helical membrane pass occupies residues 331–351 (VLLGYCLVYSLSMCGVGILVF). Residues 352–368 (QVLMDIVPMDRFPSALG) lie on the Cytoplasmic side of the membrane. A helical membrane pass occupies residues 369–389 (LFTILCGVTSLISPPLAGLLL). Over 390–396 (DKTNNFS) the chain is Extracellular. The chain crosses the membrane as a helical span at residues 397–417 (YVFYMSSGFLVSGSLILGVGF). Over 418 to 468 (YAAEKKKLKQDGQAKMENATSEMTPMHDLTSEDKDSAKKQPYPESIYMTNV) the chain is Cytoplasmic. The tract at residues 429–468 (GQAKMENATSEMTPMHDLTSEDKDSAKKQPYPESIYMTNV) is disordered. Residues 446–455 (LTSEDKDSAK) show a composition bias toward basic and acidic residues.

This sequence belongs to the major facilitator superfamily. Monocarboxylate porter (TC 2.A.1.13) family.

It localises to the cell membrane. Its function is as follows. Proton-linked monocarboxylate transporter. Catalyzes the rapid transport across the plasma membrane of many monocarboxylates such as lactate, pyruvate, branched-chain oxo acids derived from leucine, valine and isoleucine, and the ketone bodies acetoacetate, beta-hydroxybutyrate and acetate. This chain is Monocarboxylate transporter 6 (Slc16a5), found in Mus musculus (Mouse).